A 341-amino-acid polypeptide reads, in one-letter code: Processive diacylglycerol beta-glycosyltransferase (341 aa).

It belongs to the glycosyltransferase 2 family. It depends on Mg(2+) as a cofactor.

Its subcellular location is the cell membrane. It catalyses the reaction a 1,2-diacyl-sn-glycerol + UDP-alpha-D-glucose = a 1,2-diacyl-3-O-(beta-D-glucopyranosyl)-sn-glycerol + UDP + H(+). It carries out the reaction a 1,2-diacyl-sn-glycerol + UDP-alpha-D-galactose = a 1,2-diacyl-3-O-(beta-D-galactosyl)-sn-glycerol + UDP + H(+). The catalysed reaction is a 1,2-diacyl-3-O-(beta-D-galactosyl)-sn-glycerol + UDP-alpha-D-glucose = a 1,2-diacyl-3-O-[beta-D-glucopyranosyl-(1-&gt;6)-beta-D-galactopyranosyl]-sn-glycerol + UDP + H(+). The enzyme catalyses a 1,2-diacyl-3-O-(beta-D-galactosyl)-sn-glycerol + UDP-alpha-D-galactose = a 1,2-diacyl-3-O-[beta-D-galactosyl-(1-&gt;6)-beta-D-galactosyl]-sn-glycerol + UDP + H(+). Its activity is regulated as follows. Activated by the negatively charged lipid phosphatidylglycerol (PG). Functionally, processive glycosyltransferase involved in the biosynthesis of both the non-bilayer-prone beta-monoglycosyldiacylglycerol and the bilayer-forming membrane lipid glucosyl-galactosyldiacylglycerol and digalactosyl-diacylglycerol. These components contribute to regulate the properties and stability of the membrane. Catalyzes sequentially the transfers of glucosyl or galactosyl residues from UDP-Glc or UDP-Gal to diacylglycerol (DAG) acceptor to form the corresponding beta-glycosyl-DAG (3-O-(beta-D-glycopyranosyl)-1,2-diacyl-sn-glycerol). Then, only beta-galactosyl-DAG (3-O-(beta-D-galactopyranosyl)-1,2-diacyl-sn-glycerol) can act as acceptor to give the beta-glycosyl-beta-galactosyl-DAG product (3-O-(beta-D-glycopyranosyl-(1-&gt;6)-D-galactopyranosyl)-1,2-diacyl-sn-glycerol). It can also use alpha-Gal-beta-Gal-DAG, ceramide (Cer) and beta-Gal-Cer as sugar acceptors. The enzyme is supposed to be mainly a galactosyltransferase, with higher glycosyltransferase activity for the addition of the second glycosyl on beta-Gal-DAG as acceptor. The main glycolipid produced in vivo is beta-Glc-beta-Gal-DAG with a beta-1,6 linkage. The sequence is that of Processive diacylglycerol beta-glycosyltransferase from Mycoplasma pneumoniae (strain ATCC 29342 / M129 / Subtype 1) (Mycoplasmoides pneumoniae).